Reading from the N-terminus, the 105-residue chain is Large ribosomal subunit protein P2 (105 aa).

This sequence belongs to the eukaryotic ribosomal protein P1/P2 family. P1 and P2 exist as dimers at the large ribosomal subunit. Post-translationally, phosphorylated.

Functionally, plays an important role in the elongation step of protein synthesis. The protein is Large ribosomal subunit protein P2 (LIP2) of Leishmania braziliensis.